Consider the following 300-residue polypeptide: Bifunctional protein FolD (300 aa).

NADP(+) is bound by residues 169–171 (GHS) and isoleucine 235.

This sequence belongs to the tetrahydrofolate dehydrogenase/cyclohydrolase family. In terms of assembly, homodimer.

It carries out the reaction (6R)-5,10-methylene-5,6,7,8-tetrahydrofolate + NADP(+) = (6R)-5,10-methenyltetrahydrofolate + NADPH. The catalysed reaction is (6R)-5,10-methenyltetrahydrofolate + H2O = (6R)-10-formyltetrahydrofolate + H(+). It participates in one-carbon metabolism; tetrahydrofolate interconversion. Catalyzes the oxidation of 5,10-methylenetetrahydrofolate to 5,10-methenyltetrahydrofolate and then the hydrolysis of 5,10-methenyltetrahydrofolate to 10-formyltetrahydrofolate. The chain is Bifunctional protein FolD from Rhodobacter capsulatus (strain ATCC BAA-309 / NBRC 16581 / SB1003).